Consider the following 451-residue polypeptide: Tubulin beta-4 chain (451 aa).

GTP is bound by residues Gln-11, Glu-69, Ser-138, Gly-142, Thr-143, Gly-144, Asn-204, and Asn-226. Glu-69 contacts Mg(2+). Over residues 417–427 the composition is skewed to polar residues; that stretch reads DLVSEYQQYQD. Residues 417 to 451 are disordered; it reads DLVSEYQQYQDATAEEEGEYDEDDGGYGDEDDGMM. The span at 429–451 shows a compositional bias: acidic residues; that stretch reads TAEEEGEYDEDDGGYGDEDDGMM.

This sequence belongs to the tubulin family. Dimer of alpha and beta chains. A typical microtubule is a hollow water-filled tube with an outer diameter of 25 nm and an inner diameter of 15 nM. Alpha-beta heterodimers associate head-to-tail to form protofilaments running lengthwise along the microtubule wall with the beta-tubulin subunit facing the microtubule plus end conferring a structural polarity. Microtubules usually have 13 protofilaments but different protofilament numbers can be found in some organisms and specialized cells. Mg(2+) serves as cofactor.

It localises to the cytoplasm. The protein resides in the cytoskeleton. Functionally, tubulin is the major constituent of microtubules, a cylinder consisting of laterally associated linear protofilaments composed of alpha- and beta-tubulin heterodimers. Microtubules grow by the addition of GTP-tubulin dimers to the microtubule end, where a stabilizing cap forms. Below the cap, tubulin dimers are in GDP-bound state, owing to GTPase activity of alpha-tubulin. The protein is Tubulin beta-4 chain (TUBB4) of Oomycete-like sp. (strain MacKay2000).